Here is a 2788-residue protein sequence, read N- to C-terminus: E3 ubiquitin-protein ligase UBR5 (2788 aa).

A compositionally biased stretch (basic and acidic residues) spans 68–78; the sequence is RLELGKPDNND. Positions 68-165 are disordered; sequence RLELGKPDNN…DRGSGLLGSQ (98 aa). Over residues 84-101 the composition is skewed to low complexity; sequence SSSGTGRTSRPGRTSDSP. Ser-100 bears the Phosphoserine mark. A compositionally biased stretch (gly residues) spans 125-134; it reads GVGGSGGGSS. In terms of domain architecture, UBA spans 174–216; that stretch reads VIPEELISQAQVVLQGKSRSVIIRELQRTNLDVNLAVNNLLSR. Position 317 is a phosphoserine (Ser-317). Residues 318–337 are compositionally biased toward basic and acidic residues; sequence FDNERGSTSKEGEPNPDKKN. The interval 318–343 is disordered; the sequence is FDNERGSTSKEGEPNPDKKNTPVQSP. Phosphoserine is present on residues Ser-342 and Ser-567. Basic and acidic residues predominate over residues 572-593; the sequence is KSMEKASKTIETKPESKQEPVK. The disordered stretch occupies residues 572–636; sequence KSMEKASKTI…PAPKEEEKVN (65 aa). Phosphoserine is present on Ser-601. Positions 603-617 are enriched in low complexity; it reads ASTCSDASSIASSAS. Thr-626 carries the phosphothreonine modification. Ser-797, Ser-917, and Ser-1007 each carry phosphoserine. 2 disordered regions span residues 988-1024 and 1041-1064; these read AGLG…SMDP and TAAT…EPSV. Positions 1006–1022 are enriched in pro residues; sequence VSPPIAPPSWVPDPPSM. A compositionally biased stretch (polar residues) spans 1050–1062; the sequence is PSTSTIPGPSTEP. Thr-1104 and Thr-1124 each carry phosphothreonine. Residues 1166–1234 form a UBR-type zinc finger; that stretch reads DTCSFTWTGA…EKCKCKTLIA (69 aa). Residues Ser-1216, Ser-1297, Ser-1344, Ser-1364, and Ser-1470 each carry the phosphoserine modification. Residues 1288–1308 are disordered; the sequence is REDRNRKTASPDDSDMPDHDL. The segment at 1504–1729 is disordered; sequence SVEPLPPRPS…PSSTSTPAAS (226 aa). Residues 1513 to 1526 show a composition bias toward low complexity; it reads SSDQSSSSSQSQSS. Residues 1527-1542 are compositionally biased toward polar residues; the sequence is YIIRNPQQRRISQSQP. Ser-1538 is modified (phosphoserine). Composition is skewed to acidic residues over residues 1548–1563 and 1594–1603; these read EEQD…EVEV and HDEDGSDMEL. Residues 1618–1627 show a composition bias toward polar residues; that stretch reads NHSNQDNASG. Composition is skewed to low complexity over residues 1630–1646, 1657–1670, and 1715–1729; these read SVVT…ASSV, SNDS…SSQS, and AAST…PAAS. A Phosphothreonine modification is found at Thr-1725. Ser-1730 carries the post-translational modification Phosphoserine. Tyr-1735 is modified (phosphotyrosine). Phosphoserine is present on Ser-1769. Residues 1848–1881 are disordered; the sequence is LASAGDPGHPNHPLHASQNSARRERMTAREEASL. Over residues 1868–1881 the composition is skewed to basic and acidic residues; sequence ARRERMTAREEASL. Thr-1959 carries the phosphothreonine modification. The interval 1974–2011 is disordered; that stretch reads GIDNEDSEHENDDDTSQSATLNDKDDESLPAETGQNHP. Positions 1975-1988 are enriched in acidic residues; it reads IDNEDSEHENDDDT. Residues Ser-1980, Ser-2016, and Ser-2018 each carry the phosphoserine modification. Residue Thr-2020 is modified to Phosphothreonine. Ser-2066 carries the phosphoserine modification. A disordered region spans residues 2106-2132; the sequence is NRQKKAGEDQSMLAEEADSSKPGPSAH. Thr-2203 carries the post-translational modification Phosphothreonine. Residues Ser-2231 and Ser-2279 each carry the phosphoserine modification. A disordered region spans residues 2313–2383; sequence HTSLMQRLRN…SDDPDPLPAH (71 aa). Composition is skewed to basic and acidic residues over residues 2322-2338 and 2346-2358; these read NRGE…EMRR and SRRD…RRQL. Positions 2367–2444 constitute a PABC domain; it reads PASEGNPSDD…AMELIVAHGR (78 aa). The region spanning 2451 to 2788 is the HECT domain; that stretch reads ILDLGLLDSS…AIKTKNFGFV (338 aa). 3 positions are modified to phosphoserine: Ser-2459, Ser-2473, and Ser-2475. Residues 2463 to 2490 form a disordered region; it reads VQENRKRHGSSRSVVDMDLDDTDDGDDN. Residues 2479 to 2489 show a composition bias toward acidic residues; it reads MDLDDTDDGDD. Cys-2757 functions as the Glycyl thioester intermediate in the catalytic mechanism.

It belongs to the UBR5 family. In terms of assembly, homotetramer; composed of a dimer of dimers. Associates with CDK9 and TFIIS/TCEA1 and forms a transcription regulatory complex made of CDK9, RNAP II, UBR5 and TFIIS/TCEA1 that can stimulate target gene transcription (e.g. gamma fibrinogen/FGG) by recruiting their promoters. Associates with the E3 ligase complex containing DYRK2, EDD/UBR5, DDB1 and DCAF1 proteins (EDVP complex). Binds TOPBP1. Interacts with PIH1D1. Interacts with CIB1. In terms of tissue distribution, highest levels found in testis. Also present in liver, kidney, lung and brain.

It is found in the nucleus. The protein resides in the cytoplasm. The enzyme catalyses S-ubiquitinyl-[E2 ubiquitin-conjugating enzyme]-L-cysteine + [acceptor protein]-L-lysine = [E2 ubiquitin-conjugating enzyme]-L-cysteine + N(6)-ubiquitinyl-[acceptor protein]-L-lysine.. It participates in protein modification; protein ubiquitination. In terms of biological role, E3 ubiquitin-protein ligase involved in different protein quality control pathways in the cytoplasm and nucleus. Mainly acts as a ubiquitin chain elongator that extends pre-ubiquitinated substrates. Component of the N-end rule pathway: ubiquitinates proteins bearing specific N-terminal residues that are destabilizing according to the N-end rule, leading to their degradation. Recognizes type-1 N-degrons, containing positively charged amino acids (Arg, Lys and His). Together with UBR4, part of a cytoplasm protein quality control pathway that prevents protein aggregation by catalyzing assembly of heterotypic 'Lys-11'-/'Lys-48'-linked branched ubiquitin chains on aggregated proteins, leading to substrate recognition by the segregase p97/VCP and degradation by the proteasome: UBR5 is probably branching multiple 'Lys-48'-linked chains of substrates initially modified with mixed conjugates by UBR4. Together with ITCH, catalyzes 'Lys-48'-/'Lys-63'-branched ubiquitination of TXNIP, leading to its degradation: UBR5 mediates branching of 'Lys-48'-linked chains of substrates initially modified with 'Lys-63'-linked conjugates by ITCH. Catalytic component of a nuclear protein quality control pathway that mediates ubiquitination and degradation of unpaired transcription factors (i.e. transcription factors that are not assembled into functional multiprotein complexes): specifically recognizes and binds degrons that are not accessible when transcription regulators are associated with their coactivators. Ubiquitinates various unpaired transcription regulator (MYC, SUPT4H1, SUPT5H, CDC20 and MCRS1), as well as ligand-bound nuclear receptors (ESR1, NR1H3, NR3C1, PGR, RARA, RXRA AND VDR) that are not associated with their nuclear receptor coactivators (NCOAs). Involved in maturation and/or transcriptional regulation of mRNA by mediating polyubiquitination and activation of CDK9. Also acts as a regulator of DNA damage response by acting as a suppressor of RNF168, an E3 ubiquitin-protein ligase that promotes accumulation of 'Lys-63'-linked histone H2A and H2AX at DNA damage sites, thereby acting as a guard against excessive spreading of ubiquitinated chromatin at damaged chromosomes. Regulates DNA topoisomerase II binding protein (TopBP1) in the DNA damage response. Ubiquitinates acetylated PCK1. Acts as a positive regulator of the canonical Wnt signaling pathway by mediating (1) ubiquitination and stabilization of CTNNB1, and (2) 'Lys-48'-linked ubiquitination and degradation of TLE3. Promotes disassembly of the mitotic checkpoint complex (MCC) from the APC/C complex by catalyzing ubiquitination of BUB1B, BUB3 and CDC20. Plays an essential role in extraembryonic development. Required for the maintenance of skeletal tissue homeostasis by acting as an inhibitor of hedgehog (HH) signaling. This chain is E3 ubiquitin-protein ligase UBR5 (Ubr5), found in Rattus norvegicus (Rat).